A 276-amino-acid polypeptide reads, in one-letter code: Glutamate 5-kinase (276 aa).

Lysine 14 provides a ligand contact to ATP. 3 residues coordinate substrate: serine 54, aspartate 141, and asparagine 157. ATP is bound by residues 177-178 and 219-225; these read SD and TGGMLTK.

Belongs to the glutamate 5-kinase family.

It localises to the cytoplasm. The enzyme catalyses L-glutamate + ATP = L-glutamyl 5-phosphate + ADP. It participates in amino-acid biosynthesis; L-proline biosynthesis; L-glutamate 5-semialdehyde from L-glutamate: step 1/2. Functionally, catalyzes the transfer of a phosphate group to glutamate to form L-glutamate 5-phosphate. This is Glutamate 5-kinase from Listeria monocytogenes serotype 4b (strain CLIP80459).